The sequence spans 1151 residues: Cation channel sperm-associated protein subunit gamma 1 (1151 aa).

An N-terminal signal peptide occupies residues 1-38 (MVSRPAMSPVSPVWPRKPNLWAFWVLRLVLLLSLKSWA). At 39-1063 (EDTLQHCTWL…GLPLSSKRSS (1025 aa)) the chain is on the extracellular side. N-linked (GlcNAc...) asparagine glycosylation is present at asparagine 356. The helical transmembrane segment at 1064 to 1084 (FIVMVSTSFFIALVVFYILFC) threads the bilayer. The Cytoplasmic segment spans residues 1085-1151 (LVWPHIVKAW…NVQAKRAKVA (67 aa)). Over residues 1113 to 1123 (SSSSGGFTLHS) the composition is skewed to low complexity. Positions 1113–1151 (SSSSGGFTLHSHSSEGSFEGPSRPGTKEDNVQAKRAKVA) are disordered.

This sequence belongs to the CATSPERG family.

It is found in the membrane. This chain is Cation channel sperm-associated protein subunit gamma 1 (Catsperg1), found in Mus musculus (Mouse).